The following is a 966-amino-acid chain: Translation initiation factor IF-2 (966 aa).

5 stretches are compositionally biased toward basic and acidic residues: residues 99–113 (KRDE…EAAD), 123–183 (EQAR…KAEE), 197–212 (DASR…RVAV), 220–249 (AADD…EAEA), and 266–277 (PSERKAEEKKAE). Residues 99-382 (KRDEAGADQH…NFQAPTEPVV (284 aa)) form a disordered region. The span at 304–315 (AATTTTTTATTT) shows a compositional bias: low complexity. A compositionally biased stretch (gly residues) spans 346 to 359 (SSGGVGGWRGGPRG). One can recognise a tr-type G domain in the interval 466–635 (PRPPVVTVMG…LLQAEVLELK (170 aa)). The segment at 475 to 482 (GHVDHGKT) is G1. 475–482 (GHVDHGKT) contributes to the GTP binding site. Positions 500 to 504 (GITQH) are G2. A G3 region spans residues 521 to 524 (DTPG). GTP-binding positions include 521-525 (DTPGH) and 575-578 (NKID). A G4 region spans residues 575 to 578 (NKID). A G5 region spans residues 611-613 (SAK).

This sequence belongs to the TRAFAC class translation factor GTPase superfamily. Classic translation factor GTPase family. IF-2 subfamily.

The protein localises to the cytoplasm. Functionally, one of the essential components for the initiation of protein synthesis. Protects formylmethionyl-tRNA from spontaneous hydrolysis and promotes its binding to the 30S ribosomal subunits. Also involved in the hydrolysis of GTP during the formation of the 70S ribosomal complex. This is Translation initiation factor IF-2 from Cupriavidus pinatubonensis (strain JMP 134 / LMG 1197) (Cupriavidus necator (strain JMP 134)).